The chain runs to 717 residues: Methylcrotonoyl-CoA carboxylase subunit alpha, mitochondrial (717 aa).

A mitochondrion-targeting transit peptide spans 1-38; sequence MAAAALLAAVDRNQLRRVPILLLQPREWAWKLRTMKYG. A Biotin carboxylation domain is found at 45 to 490; sequence ITKVLIANRG…HTDFIPQHHK (446 aa). ATP is bound at residue lysine 159. Residues 163–360 form the ATP-grasp domain; that stretch reads KSIMAAAGVP…LVEWQLRIAA (198 aa). Residues lysine 180 and lysine 193 each carry the N6-acetyllysine modification. Residues lysine 201 and 207 to 208 contribute to the ATP site; that span reads GG. Lysine 233 carries the post-translational modification N6-acetyllysine. Residues histidine 251, histidine 278, and glutamate 318 each contribute to the ATP site. The active site involves arginine 335. Residue lysine 490 is modified to N6-acetyllysine. Lysine 577 is modified (N6-acetyllysine; alternate). Lysine 577 is subject to N6-succinyllysine; alternate. One can recognise a Biotinyl-binding domain in the interval 622-711; that stretch reads SIEVGIPVPK…NRHAPLVEFE (90 aa). Lysine 677 carries the N6-biotinyllysine modification.

In terms of assembly, probably a dodecamer composed of six biotin-containing alpha subunits (MCCC1) and six beta (MCCC2) subunits. Interacts (via the biotin carboxylation domain) with SIRT4. The cofactor is biotin. Acetylated.

Its subcellular location is the mitochondrion matrix. The enzyme catalyses 3-methylbut-2-enoyl-CoA + hydrogencarbonate + ATP = 3-methyl-(2E)-glutaconyl-CoA + ADP + phosphate + H(+). Its pathway is amino-acid degradation; L-leucine degradation; (S)-3-hydroxy-3-methylglutaryl-CoA from 3-isovaleryl-CoA: step 2/3. Functionally, biotin-attachment subunit of the 3-methylcrotonyl-CoA carboxylase, an enzyme that catalyzes the conversion of 3-methylcrotonyl-CoA to 3-methylglutaconyl-CoA, a critical step for leucine and isovaleric acid catabolism. This chain is Methylcrotonoyl-CoA carboxylase subunit alpha, mitochondrial (Mccc1), found in Mus musculus (Mouse).